The sequence spans 346 residues: Probable electron transfer flavoprotein subunit alpha, mitochondrial (346 aa).

Position 285–313 (285–313) interacts with FAD; it reads LYVAVGISGAIQHLAGMKESKMIVAINKD.

The protein belongs to the ETF alpha-subunit/FixB family. Heterodimer of an alpha and a beta subunit. Requires FAD as cofactor.

The protein localises to the mitochondrion matrix. Functionally, the electron transfer flavoprotein serves as a specific electron acceptor for several dehydrogenases, including five acyl-CoA dehydrogenases, glutaryl-CoA and sarcosine dehydrogenase. It transfers the electrons to the main mitochondrial respiratory chain via ETF-ubiquinone oxidoreductase (ETF dehydrogenase). The protein is Probable electron transfer flavoprotein subunit alpha, mitochondrial (ETF1) of Cryptococcus neoformans var. grubii (Filobasidiella neoformans var. grubii).